A 460-amino-acid polypeptide reads, in one-letter code: Transcription factor TGA10 (460 aa).

Basic residues predominate over residues M1–H11. Disordered regions lie at residues M1–G29 and L43–L163. The segment covering L12 to H21 has biased composition (low complexity). 2 stretches are compositionally biased toward polar residues: residues T65 to P81 and D121 to K136. The segment covering I138–T162 has biased composition (basic and acidic residues). The bZIP domain occupies D159 to R203. The segment at K161–K181 is basic motif. The Nuclear localization signal signature appears at L163–R170. The leucine-zipper stretch occupies residues L187 to I201. The DOG1 domain occupies A236 to R455.

It belongs to the bZIP family. As to quaternary structure, homodimer. Binds DNA as a dimer. Interacts with floral glutaredoxins GRXC7/ROXY1 and GRXC8/ROXY2 in the nucleus. Interacts with TGA1, TGA2, TGA3, TGA4, TGA5, TGA6, TGA7, TGA9 and PAN. In terms of tissue distribution, expressed at low levels in inflorescence apex and flowers.

The protein resides in the nucleus. Together with TGA9, basic leucine-zipper transcription factor required for anther development, probably via the activation of SPL expression in anthers and via the regulation of genes with functions in early and middle tapetal development. Required for signaling responses to pathogen-associated molecular patterns (PAMPs) such as flg22 that involves chloroplastic reactive oxygen species (ROS) production and subsequent expression of H(2)O(2)-responsive genes. The polypeptide is Transcription factor TGA10 (Arabidopsis thaliana (Mouse-ear cress)).